The sequence spans 110 residues: Large ribosomal subunit protein P1 (110 aa).

A2 bears the Blocked amino end (Ala) mark. The span at A69–P83 shows a compositional bias: low complexity. Residues A69 to D110 are disordered. Over residues A84–E96 the composition is skewed to basic and acidic residues. A Phosphoserine; in form eL12'-P modification is found at S97.

Part of the ribosomal stalk of the large ribosomal subunit; P1 and P2 exist as dimers which assemble on the P0 scaffold. Phosphorylation of Ser-97 converts eL12' to eL12'-P.

In terms of biological role, plays an important role in the elongation step of protein synthesis. This is Large ribosomal subunit protein P1 from Artemia salina (Brine shrimp).